An 855-amino-acid chain; its full sequence is Inactive rhomboid protein 1 (855 aa).

A disordered region spans residues 1–36 (MSEARRDSTSSLQRKKPPWLKLDIPSAVPPTAEEPS). Over 1-411 (MSEARRDSTS…HRPFFTYWLT (411 aa)) the chain is Cytoplasmic. A phosphoserine mark is found at serine 76 and serine 176. Phosphothreonine occurs at positions 180 and 183. At serine 390 the chain carries Phosphoserine. The helical transmembrane segment at 412-432 (FVHSLVTILAVCIYGIAPVGF) threads the bilayer. Over 433–655 (SQHETVDSVL…NPEVPDQFYR (223 aa)) the chain is Lumenal. Asparagine 583 carries an N-linked (GlcNAc...) asparagine glycan. Residues 656 to 676 (LWLSLFLHAGILHCLVSICFQ) form a helical membrane-spanning segment. Over 677–691 (MTVLRDLEKLAGWHR) the chain is Cytoplasmic. A helical membrane pass occupies residues 692-712 (IAIIYLLSGVTGNLASAIFLP). Topologically, residues 713-714 (YR) are lumenal. The helical transmembrane segment at 715 to 735 (AEVGPAGSQFGILACLFVELF) threads the bilayer. Over 736–746 (QSWQILARPWR) the chain is Cytoplasmic. Residues 747–767 (AFFKLLAVVLFLFTFGLLPWI) traverse the membrane as a helical segment. At 768-772 (DNFAH) the chain is on the lumenal side. The chain crosses the membrane as a helical span at residues 773–793 (ISGFISGLFLSFAFLPYISFG). The Cytoplasmic segment spans residues 794 to 803 (KFDLYRKRCQ). The helical transmembrane segment at 804–824 (IIIFQVVFLGLLAGLVVLFYF) threads the bilayer. Topologically, residues 825 to 855 (YPVRCEWCEFLTCIPFTDKFCEKYELDAQLH) are lumenal.

The protein belongs to the peptidase S54 family. As to quaternary structure, homodimer, or homooligomer. Interacts with TGFA and HBEGF. Interacts with EGF; may retain EGF in the endoplasmic reticulum and regulates its degradation through the endoplasmic reticulum-associated degradation (ERAD). Interacts (via cytoplasmic N-terminus) with FRMD8/iTAP; this interaction leads to mutual protein stabilization. Interacts with ADAM17/TACE.

It is found in the endoplasmic reticulum membrane. The protein resides in the golgi apparatus membrane. Regulates ADAM17 protease, a sheddase of the epidermal growth factor (EGF) receptor ligands and TNF, thereby plays a role in sleep, cell survival, proliferation, migration and inflammation. Does not exhibit any protease activity on its own. The polypeptide is Inactive rhomboid protein 1 (RHBDF1) (Papio anubis (Olive baboon)).